Consider the following 706-residue polypeptide: Lysophospholipase 2 (706 aa).

The first 19 residues, 1-19 (MQLRNILQASSLISGLSLA), serve as a signal peptide directing secretion. The PLA2c domain maps to 36 to 588 (PCPSDDTSLV…ADYCWNGTLS (553 aa)). Asparagine 47, asparagine 80, asparagine 94, asparagine 125, asparagine 162, asparagine 181, asparagine 193, asparagine 217, asparagine 279, asparagine 309, asparagine 365, asparagine 390, asparagine 491, asparagine 515, asparagine 524, asparagine 543, asparagine 567, asparagine 584, asparagine 598, asparagine 630, asparagine 634, asparagine 642, asparagine 648, asparagine 652, and asparagine 658 each carry an N-linked (GlcNAc...) asparagine glycan. Positions 627 to 672 (TSGNTTSNSTTSTSSNVTSNSNSSSNTTLNSNSSSSSISSSTARSS) are disordered. Asparagine 680 carries GPI-anchor amidated asparagine lipidation. A propeptide spans 681-706 (AAAISYANTNTLMSLLGAITALFGLI) (removed in mature form).

The protein belongs to the lysophospholipase family. Post-translationally, the GPI-anchor is attached to the protein in the endoplasmic reticulum and serves to target the protein to the cell surface. There, the glucosamine-inositol phospholipid moiety is cleaved off and the GPI-modified mannoprotein is covalently attached via its lipidless GPI glycan remnant to the 1,6-beta-glucan of the outer cell wall layer.

It localises to the secreted. The protein resides in the cell wall. Its subcellular location is the membrane. It carries out the reaction a 1-acyl-sn-glycero-3-phosphocholine + H2O = sn-glycerol 3-phosphocholine + a fatty acid + H(+). The catalysed reaction is 1-hexadecanoyl-sn-glycero-3-phosphoethanolamine + H2O = sn-glycero-3-phosphoethanolamine + hexadecanoate + H(+). It catalyses the reaction 1-hexadecanoyl-sn-glycero-3-phosphocholine + H2O = sn-glycerol 3-phosphocholine + hexadecanoate + H(+). The enzyme catalyses 1-hexadecanoyl-sn-glycero-3-phospho-L-serine + H2O = sn-glycero-3-phospho-L-serine + hexadecanoate + H(+). It carries out the reaction 1,2-dihexadecanoyl-sn-glycero-3-phosphocholine + H2O = 1-hexadecanoyl-sn-glycero-3-phosphocholine + hexadecanoate + H(+). Its function is as follows. Sequentially removes both fatty acyl groups from diacylglycerophospholipids and therefore has both phospholipase A and lysophospholipase activities. However, it does not display transacylase activity. Substrate preference is phosphatidylserine &gt; phosphatidylinositol &gt; phosphatidylcholine &gt; phosphatidylethanolamine. The substrate specificity is pH- and ion-dependent. In contrast with activities observed at optimum pH 3.5, the order of substrate preference at pH 5.5 is phosphatidylserine = phosphatidylethanolamine &gt; phosphatidylcholine &gt; phosphatidylinositol. The sequence is that of Lysophospholipase 2 (PLB2) from Saccharomyces cerevisiae (strain ATCC 204508 / S288c) (Baker's yeast).